The chain runs to 197 residues: Viral polyamine acetyltransferase (197 aa).

Asn22 is an acetyl-CoA binding site. The active site involves Glu27. The 81-residue stretch at 102-182 (SYTPDDKCLY…YQYGITKPFD (81 aa)) folds into the N-acetyltransferase domain. 9 residues coordinate acetyl-CoA: Ile115, Ser117, Gly121, Gly123, Ala125, Thr126, Thr149, Asn150, and Lys159.

This sequence belongs to the acetyltransferase family.

The catalysed reaction is spermine + acetyl-CoA = N(1)-acetylspermine + CoA + H(+). It carries out the reaction spermidine + acetyl-CoA = N(1)-acetylspermidine + CoA + H(+). It catalyses the reaction spermidine + acetyl-CoA = N(8)-acetylspermidine + CoA + H(+). The enzyme catalyses putrescine + acetyl-CoA = N-acetylputrescine + CoA + H(+). The catalysed reaction is cadaverine + acetyl-CoA = N-acetylcadaverine + CoA + H(+). It carries out the reaction sym-homospermidine + acetyl-CoA = N(1)-acetyl-sym-homospermidine + CoA + H(+). Its function is as follows. Acetylates polyamines such as spermine, spermidine, cadaverine, homospermidine and putrescine (the latter with low efficiency). May play a role in the regulation of polyamine catabolism in the host during viral replication. This Chlorella (PBCV-1) protein is Viral polyamine acetyltransferase.